The primary structure comprises 263 residues: Small ribosomal subunit protein uS15m (263 aa).

The N-terminal 70 residues, 1 to 70 (MVLKSVFRST…VRQYARPSRK (70 aa)), are a transit peptide targeting the mitochondrion. Residues 238 to 251 (EREKQKAEEAERKK) are compositionally biased toward basic and acidic residues. The segment at 238–263 (EREKQKAEEAERKKSSSSTNPQETAA) is disordered.

This sequence belongs to the universal ribosomal protein uS15 family. Component of the mitochondrial ribosome small subunit (28S) which comprises a 12S rRNA and about 30 distinct proteins.

It is found in the mitochondrion. In Danio rerio (Zebrafish), this protein is Small ribosomal subunit protein uS15m (mrps15).